A 273-amino-acid polypeptide reads, in one-letter code: Proteasome subunit alpha (273 aa).

The interval 231–273 is disordered; the sequence is DDGAAGQPPSSSDTDTSAAEARKPTASAGSADLEGPEPERPDS. Low complexity predominate over residues 238–249; the sequence is PPSSSDTDTSAA.

The protein belongs to the peptidase T1A family. In terms of assembly, the 20S proteasome core is composed of 14 alpha and 14 beta subunits that assemble into four stacked heptameric rings, resulting in a barrel-shaped structure. The two inner rings, each composed of seven catalytic beta subunits, are sandwiched by two outer rings, each composed of seven alpha subunits. The catalytic chamber with the active sites is on the inside of the barrel. Has a gated structure, the ends of the cylinder being occluded by the N-termini of the alpha-subunits. Is capped by the proteasome-associated ATPase, ARC.

It localises to the cytoplasm. The protein operates within protein degradation; proteasomal Pup-dependent pathway. With respect to regulation, the formation of the proteasomal ATPase ARC-20S proteasome complex, likely via the docking of the C-termini of ARC into the intersubunit pockets in the alpha-rings, may trigger opening of the gate for substrate entry. Interconversion between the open-gate and close-gate conformations leads to a dynamic regulation of the 20S proteasome proteolysis activity. Its function is as follows. Component of the proteasome core, a large protease complex with broad specificity involved in protein degradation. This chain is Proteasome subunit alpha, found in Salinispora arenicola (strain CNS-205).